The following is a 313-amino-acid chain: Homoserine O-succinyltransferase (313 aa).

Catalysis depends on Cys142, which acts as the Acyl-thioester intermediate. Positions 163 and 192 each coordinate substrate. The active-site Proton acceptor is His235. The active site involves Glu237. Arg249 is a binding site for substrate.

This sequence belongs to the MetA family.

The protein resides in the cytoplasm. The catalysed reaction is L-homoserine + succinyl-CoA = O-succinyl-L-homoserine + CoA. The protein operates within amino-acid biosynthesis; L-methionine biosynthesis via de novo pathway; O-succinyl-L-homoserine from L-homoserine: step 1/1. In terms of biological role, transfers a succinyl group from succinyl-CoA to L-homoserine, forming succinyl-L-homoserine. The polypeptide is Homoserine O-succinyltransferase (Vibrio parahaemolyticus serotype O3:K6 (strain RIMD 2210633)).